Here is a 152-residue protein sequence, read N- to C-terminus: SsrA-binding protein (152 aa).

It belongs to the SmpB family.

It is found in the cytoplasm. Its function is as follows. Required for rescue of stalled ribosomes mediated by trans-translation. Binds to transfer-messenger RNA (tmRNA), required for stable association of tmRNA with ribosomes. tmRNA and SmpB together mimic tRNA shape, replacing the anticodon stem-loop with SmpB. tmRNA is encoded by the ssrA gene; the 2 termini fold to resemble tRNA(Ala) and it encodes a 'tag peptide', a short internal open reading frame. During trans-translation Ala-aminoacylated tmRNA acts like a tRNA, entering the A-site of stalled ribosomes, displacing the stalled mRNA. The ribosome then switches to translate the ORF on the tmRNA; the nascent peptide is terminated with the 'tag peptide' encoded by the tmRNA and targeted for degradation. The ribosome is freed to recommence translation, which seems to be the essential function of trans-translation. The sequence is that of SsrA-binding protein from Rickettsia conorii (strain ATCC VR-613 / Malish 7).